The chain runs to 89 residues: Transcriptional regulator WhiB2 (89 aa).

The segment covering 1–15 (MVPEAPAPFEEPLPP) has biased composition (pro residues). The interval 1-24 (MVPEAPAPFEEPLPPEATDQWQDR) is disordered. The region spanning 26-83 (LCAQTDPEAFFPEKGGSTREAKKICMGCEVRHECLEYALAHDERFGIWGGLSERERRR) is the 4Fe-4S Wbl-type domain. Position 27 (Cys-27) interacts with [4Fe-4S] cluster. At Ser-42 the chain carries Phosphoserine. Residues Cys-50, Cys-53, and Cys-59 each contribute to the [4Fe-4S] cluster site.

The protein belongs to the WhiB family. [4Fe-4S] cluster serves as cofactor. Post-translationally, may be phosphorylated, possibly on Ser-42. The cluster is degraded quickly in the presence of air. Upon cluster removal intramolecular disulfide bonds are formed. In terms of processing, the Fe-S cluster can be nitrosylated by nitric oxide (NO).

It localises to the cytoplasm. In terms of biological role, acts as a transcriptional regulator. Probably redox-responsive. The apo- but not holo-form probably binds DNA. Its function is as follows. The apo-form functions as a chaperone, preventing aggregation or helping in correct refolding of a number of substrates; this activity does not require ATP or the ability to bind a Fe-S cluster. Chaperone activity is insensitive to the redox state of its cysteine residues. The apo-form has no protein disulfide reductase activity. The apo-form binds to its own promoter. The chain is Transcriptional regulator WhiB2 (whiB2) from Mycobacterium tuberculosis (strain ATCC 25618 / H37Rv).